We begin with the raw amino-acid sequence, 865 residues long: Leucine-rich repeat-containing protein 66 (865 aa).

Residues 4–24 form a helical membrane-spanning segment; sequence FYARVTVMVTGLCFVGTVTNP. An N-linked (GlcNAc...) asparagine glycan is attached at Asn-42. LRR repeat units follow at residues 138 to 160, 161 to 182, 185 to 206, 209 to 230, and 235 to 255; these read RLKVLLLQRNQLGPTPKGLWKLK, PLCSLDLSFNRRVGIGLSGFHG, QLKSIYLKNNKILTIHPEAFKG, KLQVVDLRSSALTMLVPIVTIA, and NLELGLADNQWQCNESDANFQ. An N-linked (GlcNAc...) asparagine glycan is attached at Asn-248. The helical transmembrane segment at 366–386 threads the bilayer; the sequence is ALAVCLSVFITFVVAFCLGAF. 2 disordered regions span residues 463 to 522 and 654 to 749; these read RMLG…PGQH and DTPS…AESV. Positions 470 to 479 are enriched in polar residues; it reads MDPSSQQSPG. A compositionally biased stretch (basic and acidic residues) spans 675–688; it reads AVQRDASFDPHDDL. Residues 702 to 713 show a composition bias toward polar residues; that stretch reads FTLSSEGSQDTR. Phosphoserine occurs at positions 714 and 748. Residues 728–759 enclose the LRRNT domain; it reads SQPLPSRNLGEYKDSVTSAESVEDITSQQTLE. N-linked (GlcNAc...) asparagine glycosylation occurs at Asn-787. The disordered stretch occupies residues 840 to 865; sequence FPNIDSSPSPPCSDQDPSDPEEHDTK. Acidic residues predominate over residues 855 to 865; the sequence is DPSDPEEHDTK.

It localises to the membrane. The sequence is that of Leucine-rich repeat-containing protein 66 (Lrrc66) from Rattus norvegicus (Rat).